A 236-amino-acid polypeptide reads, in one-letter code: MRTIVVCSGGLDSVSLAHKIAAEQQLIGLVSFDYGQRHRKELDFAARCAARLAVPHHIIDISAIGGHLSGSALTDDIEVPDGHYAEETMKATVVPNRNAIMLAIAFGLAAAQKADAVAVAVHGGDHFIYPDCRPGFIDAFQRMQNEALDGYASVRLLAPYVEVSKAAIVTDGEKHATPFAETWSCYKGGRLHCGRCGTCVERREAFHLAGIPDPTEYEDQDFWKAAVSQYSAAEVR.

Residue 7–17 coordinates ATP; that stretch reads CSGGLDSVSLA. Zn(2+) is bound by residues cysteine 185, cysteine 193, cysteine 196, and cysteine 199.

The protein belongs to the QueC family. Requires Zn(2+) as cofactor.

The enzyme catalyses 7-carboxy-7-deazaguanine + NH4(+) + ATP = 7-cyano-7-deazaguanine + ADP + phosphate + H2O + H(+). It functions in the pathway purine metabolism; 7-cyano-7-deazaguanine biosynthesis. Catalyzes the ATP-dependent conversion of 7-carboxy-7-deazaguanine (CDG) to 7-cyano-7-deazaguanine (preQ(0)). The protein is 7-cyano-7-deazaguanine synthase of Rhizobium leguminosarum bv. trifolii (strain WSM2304).